Consider the following 372-residue polypeptide: MHNQAPIQRRKSTRIYVGNVPIGDGAPIAVQSMTNTRTTDVEATVNQIKALERVGADIVRVSVPTMDAAEAFKLIKQQVNVPLVADIHFDYRIALKVAEYGVDCLRINPGNIGNEERIRMVVDCARDKNIPIRIGVNAGSLEKDLQEKYGEPTPQALLESAMRHVDHLDRLNFEQFKVSVKASDVFLAVESYRLLAKQIDQPLHLGITEAGGARSGAVKSAIGLGLLLSEGIGDTLRVSLAADPVEEIKVGFDILKSLRIRSRGINFIACPTCSRQEFDVIGTVNALEQRLEDIITPMDVSIIGCVVNGPGEALVSTLGVTGGNKKSGLYEDGVRKDRLDNNDMIDQLEARIRAKASQLDEARRIDVQQVEK.

4 residues coordinate [4Fe-4S] cluster: Cys-270, Cys-273, Cys-305, and Glu-312.

It belongs to the IspG family. The cofactor is [4Fe-4S] cluster.

It catalyses the reaction (2E)-4-hydroxy-3-methylbut-2-enyl diphosphate + oxidized [flavodoxin] + H2O + 2 H(+) = 2-C-methyl-D-erythritol 2,4-cyclic diphosphate + reduced [flavodoxin]. It functions in the pathway isoprenoid biosynthesis; isopentenyl diphosphate biosynthesis via DXP pathway; isopentenyl diphosphate from 1-deoxy-D-xylulose 5-phosphate: step 5/6. Converts 2C-methyl-D-erythritol 2,4-cyclodiphosphate (ME-2,4cPP) into 1-hydroxy-2-methyl-2-(E)-butenyl 4-diphosphate. The polypeptide is 4-hydroxy-3-methylbut-2-en-1-yl diphosphate synthase (flavodoxin) (Escherichia coli (strain SMS-3-5 / SECEC)).